Here is a 184-residue protein sequence, read N- to C-terminus: Large ribosomal subunit protein uL5 (184 aa).

It belongs to the universal ribosomal protein uL5 family. As to quaternary structure, part of the 50S ribosomal subunit; part of the 5S rRNA/L5/L18/L25 subcomplex. Contacts the 5S rRNA and the P site tRNA. Forms a bridge to the 30S subunit in the 70S ribosome.

Its function is as follows. This is one of the proteins that bind and probably mediate the attachment of the 5S RNA into the large ribosomal subunit, where it forms part of the central protuberance. In the 70S ribosome it contacts protein S13 of the 30S subunit (bridge B1b), connecting the 2 subunits; this bridge is implicated in subunit movement. Contacts the P site tRNA; the 5S rRNA and some of its associated proteins might help stabilize positioning of ribosome-bound tRNAs. In Corynebacterium kroppenstedtii (strain DSM 44385 / JCM 11950 / CIP 105744 / CCUG 35717), this protein is Large ribosomal subunit protein uL5.